The chain runs to 83 residues: Cytochrome b559 subunit alpha (83 aa).

A helical membrane pass occupies residues 21–35; sequence VIHSITIPSLFIAGW. Heme is bound at residue histidine 23.

Belongs to the PsbE/PsbF family. In terms of assembly, heterodimer of an alpha subunit and a beta subunit. PSII is composed of 1 copy each of membrane proteins PsbA, PsbB, PsbC, PsbD, PsbE, PsbF, PsbH, PsbI, PsbJ, PsbK, PsbL, PsbM, PsbT, PsbX, PsbY, PsbZ, Psb30/Ycf12, at least 3 peripheral proteins of the oxygen-evolving complex and a large number of cofactors. It forms dimeric complexes. Heme b is required as a cofactor.

The protein localises to the plastid. It is found in the chloroplast thylakoid membrane. Functionally, this b-type cytochrome is tightly associated with the reaction center of photosystem II (PSII). PSII is a light-driven water:plastoquinone oxidoreductase that uses light energy to abstract electrons from H(2)O, generating O(2) and a proton gradient subsequently used for ATP formation. It consists of a core antenna complex that captures photons, and an electron transfer chain that converts photonic excitation into a charge separation. This chain is Cytochrome b559 subunit alpha, found in Pinus koraiensis (Korean pine).